Consider the following 307-residue polypeptide: Pseudouridine-5'-phosphate glycosidase (307 aa).

Catalysis depends on glutamate 28, which acts as the Proton donor. Residues lysine 89 and valine 109 each coordinate substrate. Residue aspartate 141 coordinates Mn(2+). Residue 143–145 (SAD) participates in substrate binding. The active-site Nucleophile is the lysine 162.

This sequence belongs to the pseudouridine-5'-phosphate glycosidase family. As to quaternary structure, homotrimer. It depends on Mn(2+) as a cofactor.

It catalyses the reaction D-ribose 5-phosphate + uracil = psi-UMP + H2O. Catalyzes the reversible cleavage of pseudouridine 5'-phosphate (PsiMP) to ribose 5-phosphate and uracil. Functions biologically in the cleavage direction, as part of a pseudouridine degradation pathway. In Alkaliphilus metalliredigens (strain QYMF), this protein is Pseudouridine-5'-phosphate glycosidase.